Reading from the N-terminus, the 301-residue chain is Ornithine carbamoyltransferase (301 aa).

Carbamoyl phosphate-binding positions include Arg-107 and 134-137 (HPLQ). L-ornithine-binding positions include Asn-165, Asp-220, and 224–225 (SM). Carbamoyl phosphate-binding positions include 260–261 (CL) and Arg-288.

Belongs to the aspartate/ornithine carbamoyltransferase superfamily. OTCase family. Homotrimer.

The protein resides in the cytoplasm. The enzyme catalyses carbamoyl phosphate + L-ornithine = L-citrulline + phosphate + H(+). It participates in amino-acid biosynthesis; L-arginine biosynthesis; L-arginine from L-ornithine and carbamoyl phosphate: step 1/3. With respect to regulation, inhibited by delta-N-phosphonoacetyl-L-ornithine. Reversibly catalyzes the transfer of the carbamoyl group from carbamoyl phosphate (CP) to the N(epsilon) atom of ornithine (ORN) to produce L-citrulline, which is a substrate for argininosuccinate synthetase, the enzyme involved in the final step in arginine biosynthesis. This is Ornithine carbamoyltransferase from Thermus thermophilus (strain ATCC BAA-163 / DSM 7039 / HB27).